A 105-amino-acid polypeptide reads, in one-letter code: MYKEPKNESEYEAELKNAPVAVVYLTATWCGPCRAIAPVFTNISNAPENSKITFFKVDVDALKKLPVCESLQGVPTFIAYRNGEEQERFSGANKVALENMVKKLL.

One can recognise a Thioredoxin domain in the interval 1 to 104 (MYKEPKNESE…VALENMVKKL (104 aa)). Residues C30 and C33 each act as nucleophile in the active site. A disulfide bridge connects residues C30 and C33.

This sequence belongs to the thioredoxin family.

In terms of biological role, participates in various redox reactions through the reversible oxidation of its active center dithiol to a disulfide and catalyzes dithiol-disulfide exchange reactions. In Dictyostelium discoideum (Social amoeba), this protein is Putative thioredoxin-5 (trxE).